The sequence spans 155 residues: Large ribosomal subunit protein uL22c (155 aa).

Belongs to the universal ribosomal protein uL22 family. As to quaternary structure, part of the 50S ribosomal subunit.

Its subcellular location is the plastid. It is found in the chloroplast. Its function is as follows. This protein binds specifically to 23S rRNA. The globular domain of the protein is located near the polypeptide exit tunnel on the outside of the subunit, while an extended beta-hairpin is found that lines the wall of the exit tunnel in the center of the 70S ribosome. The chain is Large ribosomal subunit protein uL22c (rpl22) from Coffea arabica (Arabian coffee).